Here is a 420-residue protein sequence, read N- to C-terminus: Methyltransferase/ribosomally synthesized cyclic peptide gymnopeptides precursor gymMA1 (420 aa).

Residues 1-251 form a methyltransferase domain region; it reads MQSSTQKQAG…GISTFYIPPK (251 aa). Active-site residues include Arg72, Tyr76, and Tyr98. Tyr98, His100, Val103, Ala130, Gln172, Ala213, Ser244, and Thr245 together coordinate S-adenosyl-L-methionine. Residues 252 to 378 are clasp domain; that stretch reads ELKDPSMDIM…WALRCAMKKM (127 aa). Residues 379-392 form a precursor leader region; the sequence is PSSFMDEVDANNLP. N-methylvaline occurs at positions 394 and 396. Position 398 is an N-methylglycine (Gly398). Residue Val399 is modified to N-methylvaline. An N-methylalanine modification is found at Ala400. Gly402 bears the N-methylglycine mark. An N-methylvaline mark is found at Val404, Val406, Val408, and Val410.

In the N-terminal section; belongs to the precorrin methyltransferase family. Homodimer. In terms of processing, gymMA1 automethylates at Val-394, Val-396, Gly-398, Val-399, Ala-400, Gly-402, Val-404, Val-406, Val-408 and Val-410 before being processed by a prolyloligopeptidase which likely forms a peptidyl ester upon removal of the follower propeptide, which then undergoes macrocyclization with the N-terminus of the modified core peptide. Peptide backbone alpha-N-methylations change the physicochemical properties of amide bonds to provide structural constraints and other favorable characteristics including biological membrane permeability to peptides.

It functions in the pathway mycotoxin biosynthesis. In terms of biological role, fusion protein of the methyltransferase gymM1 and the gymnopeptides precursor; part of the gene cluster that mediates the biosynthesis of gymnopeptides, highly methylated cyclic octadecapeptides with striking antiproliferative activity on several human cancer cell lines. Gymnopeptides derive from the C-terminus of the gymMA1 protein, and it is the gymMA1 protein that methylates its own C-terminus using S-adenosyl methionine (SAM). The C-terminus is subsequently cleaved off and macrocyclized by a prolyloligopeptidase to give the final product. The protein is Methyltransferase/ribosomally synthesized cyclic peptide gymnopeptides precursor gymMA1 of Gymnopus fusipes (Spindle toughshank).